Consider the following 314-residue polypeptide: Olfactory receptor 9A1 (314 aa).

Residues 1-24 (MLGNYSSATEFFLLGFPGSQEVCR) are Extracellular-facing. Asn4 is a glycosylation site (N-linked (GlcNAc...) asparagine). Residues 25 to 45 (ILFATFFLLYAVTVMGNVVII) form a helical membrane-spanning segment. Residues 46–64 (ITVCVDKCLQSPIYFFLGH) are Cytoplasmic-facing. The helical transmembrane segment at 65–85 (LCVLEILITSTAVPFMLWGLL) threads the bilayer. The Extracellular segment spans residues 86–99 (LPSTQIMSLTACAA). Cys97 and Cys179 are oxidised to a cystine. The helical transmembrane segment at 100–120 (QLYLYLSLGTLELALMGVMAV) threads the bilayer. The Cytoplasmic portion of the chain corresponds to 121–140 (DRYVAVCNPLRYNIIMNSST). The chain crosses the membrane as a helical span at residues 141-161 (FIWVIIVSWVLGFLSEIWPVY). Topologically, residues 162-196 (ATFQLTFCKSSVLDHFYCDRGQLLKVSCEDTLFRE) are extracellular. Residues 197–217 (FILFLMAVFIIIGSLIPTIVS) form a helical membrane-spanning segment. Over 218-239 (YTYIISTNLKIPSASGWRKSFS) the chain is Cytoplasmic. Residues 240-260 (TCASHFTYVVIGYGSCLFLYV) form a helical membrane-spanning segment. The Extracellular segment spans residues 261-271 (KPKQTQAAEYN). Residues 272–292 (RVVSLLVLVVTPFLNPFIFTL) traverse the membrane as a helical segment. Over 293–314 (RNDKFIQAFGDGMKHCYKLLKN) the chain is Cytoplasmic.

Belongs to the G-protein coupled receptor 1 family.

The protein resides in the cell membrane. Odorant receptor. The polypeptide is Olfactory receptor 9A1 (OR9A1P) (Homo sapiens (Human)).